Reading from the N-terminus, the 374-residue chain is Ribosomal RNA large subunit methyltransferase G (374 aa).

It belongs to the methyltransferase superfamily. RlmG family.

Its subcellular location is the cytoplasm. It carries out the reaction guanosine(1835) in 23S rRNA + S-adenosyl-L-methionine = N(2)-methylguanosine(1835) in 23S rRNA + S-adenosyl-L-homocysteine + H(+). Specifically methylates the guanine in position 1835 (m2G1835) of 23S rRNA. This chain is Ribosomal RNA large subunit methyltransferase G, found in Pseudomonas entomophila (strain L48).